Reading from the N-terminus, the 426-residue chain is Serine protease HTRA2, mitochondrial (426 aa).

The N-terminal 30 residues, 1 to 30, are a transit peptide targeting the mitochondrion; the sequence is MALRGSHRLDDFIRRCSALTLFHSQAPSRR. The interval 30–59 is disordered; that stretch reads RVSHCGRDRRQQQDPPGQGRQEQQESGGGH. The propeptide occupies 31–78; the sequence is VSHCGRDRRQQQDPPGQGRQEQQESGGGHWSRFGWRSLIRFFVPFSLG. A compositionally biased stretch (low complexity) spans 42 to 54; that stretch reads QDPPGQGRQEQQE. Residues 68 to 86 traverse the membrane as a helical segment; that stretch reads LIRFFVPFSLGAVASSLVI. An IAP-binding motif is present at residues 79-82; that stretch reads AVAS. The segment at 143–306 is serine protease; the sequence is SNGSGFIIEQ…IPIDYVKVFL (164 aa). Residues histidine 161, aspartate 193, and serine 270 each act as charge relay system in the active site. Residues 329 to 414 form the PDZ domain; the sequence is MGITMLTLTP…HLDIVILRGV (86 aa).

This sequence belongs to the peptidase S1C family. As to quaternary structure, interacts with th/DIAP1 (via BIR 2 domain).

It is found in the mitochondrion intermembrane space. The protein resides in the mitochondrion membrane. The enzyme catalyses Cleavage of non-polar aliphatic amino-acids at the P1 position, with a preference for Val, Ile and Met. At the P2 and P3 positions, Arg is selected most strongly with a secondary preference for other hydrophilic residues.. Its function is as follows. Serine protease that shows proteolytic activity against a non-specific substrate beta-casein. Promotes or induces cell death either by direct binding to and inhibition of BIRC proteins (also called inhibitor of apoptosis proteins, IAPs), leading to an increase in caspase activity, or by a BIRC inhibition-independent, caspase-independent and serine protease activity-dependent mechanism. Can antagonize antiapoptotic activity of th/Diap1 by directly inducing the degradation of th/Diap1. The protein is Serine protease HTRA2, mitochondrial of Drosophila ananassae (Fruit fly).